We begin with the raw amino-acid sequence, 109 residues long: Spermidine export protein MdtI (109 aa).

4 consecutive transmembrane segments (helical) span residues 6 to 26 (FYPI…NILL), 36 to 56 (WLGI…AQAV), 64 to 84 (AYAM…WILF), and 88 to 108 (LNYK…MIKL).

It belongs to the drug/metabolite transporter (DMT) superfamily. Small multidrug resistance (SMR) (TC 2.A.7.1) family. MdtI subfamily. As to quaternary structure, forms a complex with MdtJ.

The protein localises to the cell inner membrane. Its function is as follows. Catalyzes the excretion of spermidine. The sequence is that of Spermidine export protein MdtI from Yersinia pseudotuberculosis serotype I (strain IP32953).